The following is a 126-amino-acid chain: Muscarinic acetylcholine receptor M4 (126 aa).

Residues 1–90 (MKQSVKKPPP…LQPRTLNPAS (90 aa)) are disordered. Residues 1 to 126 (MKQSVKKPPP…PAGMRPAANV (126 aa)) are Cytoplasmic-facing. Over residues 28 to 39 (APPPVLPPPPRP) the composition is skewed to pro residues. Over residues 47–57 (NESSSGSATQN) the composition is skewed to polar residues. A compositionally biased stretch (low complexity) spans 64–75 (TELSTTEATTPA).

Belongs to the G-protein coupled receptor 1 family. Muscarinic acetylcholine receptor subfamily. CHRM4 sub-subfamily.

The protein localises to the cell membrane. The protein resides in the postsynaptic cell membrane. Its function is as follows. The muscarinic acetylcholine receptor mediates various cellular responses, including inhibition of adenylate cyclase, breakdown of phosphoinositides and modulation of potassium channels through the action of G proteins. Primary transducing effect is inhibition of adenylate cyclase. May couple to multiple functional responses in cell lines. The sequence is that of Muscarinic acetylcholine receptor M4 (CHRM4) from Bos taurus (Bovine).